A 103-amino-acid chain; its full sequence is MYAVFQSGGKQHRVSEGQVVRLEKLEVATGETVEFDSVLMIVNGEDVKIGAPVVAGGKVVAEVVAHGRGDKVKIVKFRRRKHSRKQQGHRQWFTEVKITGIQA.

The protein belongs to the bacterial ribosomal protein bL21 family. As to quaternary structure, part of the 50S ribosomal subunit. Contacts protein L20.

Its function is as follows. This protein binds to 23S rRNA in the presence of protein L20. The chain is Large ribosomal subunit protein bL21 from Pasteurella multocida (strain Pm70).